A 293-amino-acid chain; its full sequence is ATP synthase gamma chain (293 aa).

It belongs to the ATPase gamma chain family. In terms of assembly, F-type ATPases have 2 components, CF(1) - the catalytic core - and CF(0) - the membrane proton channel. CF(1) has five subunits: alpha(3), beta(3), gamma(1), delta(1), epsilon(1). CF(0) has three main subunits: a, b and c.

The protein localises to the cell inner membrane. Its function is as follows. Produces ATP from ADP in the presence of a proton gradient across the membrane. The gamma chain is believed to be important in regulating ATPase activity and the flow of protons through the CF(0) complex. This is ATP synthase gamma chain from Gluconacetobacter diazotrophicus (strain ATCC 49037 / DSM 5601 / CCUG 37298 / CIP 103539 / LMG 7603 / PAl5).